Here is a 256-residue protein sequence, read N- to C-terminus: EFLTYMNKLYKEGLIDQEMPINTSAKAIEKFSSGKAAIFKQAYWNAGTTEKALKKNDPNAKTAIIPYLKDKSGKASTFVKANTTWFVTIPKVSKHKEDAVKFLDLKLKPDNFIEIAIGKQGEHHEIKDGKYYPILPKFNDELNNGSGFLTGVDYKKYPDYWQARVRKDPVLQAFFEEINKNAQGIMVTDPLAKAPPIADISKNKQKLDKFQTDSMLKFISGSDPLANYDQFLTKWKADGGEAMTKAANEWFKNAKK.

It to B.subtilis LplA.

This is an uncharacterized protein from Niallia circulans (Bacillus circulans).